We begin with the raw amino-acid sequence, 156 residues long: Ribonuclease pancreatic (156 aa).

A signal peptide spans 1 to 28 (MALEKSLVRLLLLVLILLVLGWVQPSLG). Over residues 33–43 (AKKFQRQHMDS) the composition is skewed to basic and acidic residues. A disordered region spans residues 33–53 (AKKFQRQHMDSDSSPSSSSTY). Positions 35 and 38 each coordinate substrate. His40 acts as the Proton acceptor in catalysis. Intrachain disulfides connect Cys54/Cys112, Cys68/Cys123, Cys86/Cys138, and Cys93/Cys100. N-linked (GlcNAc...) asparagine; partial glycosylation occurs at Asn62. Substrate-binding positions include 69–73 (KPVNT) and Lys94. Residue Asn104 is glycosylated (N-linked (GlcNAc...) asparagine). Substrate is bound at residue Arg113. A glycan (N-linked (GlcNAc...) asparagine) is linked at Asn116. The active-site Proton donor is the His147.

This sequence belongs to the pancreatic ribonuclease family. As to quaternary structure, monomer. Interacts with and forms tight 1:1 complexes with RNH1. Dimerization of two such complexes may occur. Interaction with RNH1 inhibits this protein. In terms of processing, N-linked glycans are of complex type. Pancreas and other tissues and body fluids (indicating it may have other physiological functions besides its role in digestion).

It localises to the secreted. It catalyses the reaction an [RNA] containing cytidine + H2O = an [RNA]-3'-cytidine-3'-phosphate + a 5'-hydroxy-ribonucleotide-3'-[RNA].. The catalysed reaction is an [RNA] containing uridine + H2O = an [RNA]-3'-uridine-3'-phosphate + a 5'-hydroxy-ribonucleotide-3'-[RNA].. Functionally, endonuclease that catalyzes the cleavage of RNA on the 3' side of pyrimidine nucleotides. Acts on single-stranded and double-stranded RNA. The protein is Ribonuclease pancreatic (RNASE1) of Homo sapiens (Human).